Reading from the N-terminus, the 403-residue chain is Heparan-sulfate 6-O-sulfotransferase 2 (403 aa).

The Cytoplasmic portion of the chain corresponds to 1–7; that stretch reads MEDRSHK. A helical; Signal-anchor for type II membrane protein membrane pass occupies residues 8–28; it reads VLLALVMLFLFAVIVLQYVCP. The Lumenal portion of the chain corresponds to 29–403; that stretch reads GTECQLLRLR…DYLGNVERWR (375 aa). Residue Asn-64 is glycosylated (N-linked (GlcNAc...) asparagine). 88–96 is a 3'-phosphoadenylyl sulfate binding site; that stretch reads HIQKTGGTT. Substrate is bound by residues 118–119, Arg-135, Trp-140, and His-145; that span reads KK. Catalysis depends on His-145, which acts as the Proton acceptor. 3'-phosphoadenylyl sulfate is bound by residues Arg-180 and Ser-188. Positions 192 and 199 each coordinate substrate. Asn-259 is a glycosylation site (N-linked (GlcNAc...) asparagine). Residue 312–314 coordinates 3'-phosphoadenylyl sulfate; sequence TQY. Asn-315 carries N-linked (GlcNAc...) asparagine glycosylation. 318 to 319 lines the 3'-phosphoadenylyl sulfate pocket; sequence RA. The disordered stretch occupies residues 381-403; the sequence is AHLREQGENSSSTDYLGNVERWR. Residue Asn-389 is glycosylated (N-linked (GlcNAc...) asparagine).

The protein belongs to the sulfotransferase 6 family.

It is found in the membrane. It carries out the reaction alpha-D-glucosaminyl-[heparan sulfate](n) + 3'-phosphoadenylyl sulfate = 6-sulfo-alpha-D-glucosaminyl-[heparan sulfate](n) + adenosine 3',5'-bisphosphate + H(+). 6-O-sulfation enzyme which catalyzes the transfer of sulfate from 3'-phosphoadenosine 5'-phosphosulfate (PAPS) to position 6 of the N-sulfoglucosamine residue (GlcNS) of heparan sulfate. May also play a role in limb development. The polypeptide is Heparan-sulfate 6-O-sulfotransferase 2 (HS6ST2) (Gallus gallus (Chicken)).